The following is a 614-amino-acid chain: DNA mismatch repair protein MutL (614 aa).

Belongs to the DNA mismatch repair MutL/HexB family.

This protein is involved in the repair of mismatches in DNA. It is required for dam-dependent methyl-directed DNA mismatch repair. May act as a 'molecular matchmaker', a protein that promotes the formation of a stable complex between two or more DNA-binding proteins in an ATP-dependent manner without itself being part of a final effector complex. The sequence is that of DNA mismatch repair protein MutL from Thermoanaerobacter pseudethanolicus (strain ATCC 33223 / 39E) (Clostridium thermohydrosulfuricum).